A 757-amino-acid polypeptide reads, in one-letter code: RNA-directed RNA polymerase catalytic subunit (757 aa).

The interval 50–82 is disordered; that stretch reads SEKGKWTTNTETGAPQLNPIDGPLPEDNEPSGY. The span at 55 to 64 shows a compositional bias: polar residues; it reads WTTNTETGAP. 2 consecutive short sequence motifs (nuclear localization signal) follow at residues 187–195 and 203–216; these read RKRRVRDNM and RTIGKKKQRVNKRS. The tract at residues 249 to 256 is promoter-binding site; sequence RGFVYFVE. In terms of domain architecture, RdRp catalytic spans 286–483; the sequence is VRKMMTNSQD…GINMSKKKSY (198 aa).

The protein belongs to the influenza viruses polymerase PB1 family. In terms of assembly, influenza RNA polymerase is composed of three subunits: PB1, PB2 and PA. Interacts (via N-terminus) with PA (via C-terminus). Interacts (via C-terminus) with PB2 (via N-terminus); this interaction is essential for transcription initiation. Phosphorylated by host PRKCA.

Its subcellular location is the host nucleus. It localises to the host cytoplasm. The enzyme catalyses RNA(n) + a ribonucleoside 5'-triphosphate = RNA(n+1) + diphosphate. Functionally, RNA-dependent RNA polymerase which is responsible for replication and transcription of virus RNA segments. The transcription of viral mRNAs occurs by a unique mechanism called cap-snatching. 5' methylated caps of cellular mRNAs are cleaved after 10-13 nucleotides by PA. In turn, these short capped RNAs are used as primers by PB1 for transcription of viral mRNAs. During virus replication, PB1 initiates RNA synthesis and copy vRNA into complementary RNA (cRNA) which in turn serves as a template for the production of more vRNAs. The sequence is that of RNA-directed RNA polymerase catalytic subunit from Aves (whales).